A 551-amino-acid polypeptide reads, in one-letter code: HTH-type transcriptional regulator SgrR (551 aa).

The HTH marR-type domain maps to 1–116 (MPSARLQQQF…LVSHLGRSFR (116 aa)). The segment at residues 26–49 (LNELAALLSCSRRHMRTLLNTMQD) is a DNA-binding region (H-T-H motif). The segment at 163 to 492 (ELEADIAHHW…IDWQADAARW (330 aa)) is solute-binding.

Its function is as follows. Activates the small RNA gene sgrS under glucose-phosphate stress conditions as well as yfdZ. Represses its own transcription under both stress and non-stress conditions. Might act as a sensor of the intracellular accumulation of phosphoglucose by binding these molecules in its C-terminal solute-binding domain. This is HTH-type transcriptional regulator SgrR from Shigella boydii serotype 4 (strain Sb227).